The following is a 69-amino-acid chain: Large ribosomal subunit protein uL29 (69 aa).

Belongs to the universal ribosomal protein uL29 family.

The sequence is that of Large ribosomal subunit protein uL29 from Treponema denticola (strain ATCC 35405 / DSM 14222 / CIP 103919 / JCM 8153 / KCTC 15104).